A 251-amino-acid chain; its full sequence is Extracellular superoxide dismutase [Cu-Zn] (251 aa).

Residues 1–15 (MLAFLFYGLLLAACG) form the signal peptide. Positions 16 to 24 (SVTMSNPGE) are excised as a propeptide. Intrachain disulfides connect C77-C222 and C139-C221. N-linked (GlcNAc...) asparagine glycosylation occurs at N121. Residues H128, H130, and H145 each contribute to the Cu cation site. Positions 145, 153, 156, and 159 each coordinate Zn(2+). A Cu cation-binding site is contributed by H195. The disordered stretch occupies residues 230–251 (AAWESQTKERKKRRRESECKTT).

The protein belongs to the Cu-Zn superoxide dismutase family. As to quaternary structure, homotetramer. Directly interacts with ATP7A/MNK; this interaction is copper-dependent and is required for SOD3 activity. Requires Cu cation as cofactor. It depends on Zn(2+) as a cofactor.

The protein resides in the secreted. Its subcellular location is the extracellular space. It is found in the golgi apparatus. The protein localises to the trans-Golgi network. The enzyme catalyses 2 superoxide + 2 H(+) = H2O2 + O2. Its function is as follows. Protect the extracellular space from toxic effect of reactive oxygen intermediates by converting superoxide radicals into hydrogen peroxide and oxygen. This Mus musculus (Mouse) protein is Extracellular superoxide dismutase [Cu-Zn] (Sod3).